Reading from the N-terminus, the 445-residue chain is Gamma conglutin 2 (445 aa).

An N-terminal signal peptide occupies residues 1–33; it reads MAQNMAPIFHFIAISLSCSFLFVLSSSQDSQSL. The Peptidase A1 domain occupies 60 to 425; sequence HWANIHKRTP…DFAKSRVEFN (366 aa). 5 disulfide bridges follow: cysteine 88/cysteine 178, cysteine 102/cysteine 115, cysteine 107/cysteine 133, cysteine 118/cysteine 128, and cysteine 346/cysteine 387. Asparagine 130 carries an N-linked (GlcNAc...) asparagine glycan.

The protein belongs to the peptidase A1 family. As to quaternary structure, two-subunit monomeric unit made of alpha and beta subunits coupled by disulfide bonds (at pH 4.5 and under non-reducing conditions). Can also form oligomers including dimer, tetramer and cyclic hexamer (trimer of dimers) (at pH &gt; 5.5). Component of globulins complexes which accumulate in seeds. Interacts with flavonoids (e.g. apigenin glucosides) present in globulins complexes. Post-translationally, glycosylated on alpha chain.

Its subcellular location is the secreted. The protein localises to the extracellular space. In terms of biological role, sulfur-rich seed storage protein that remains undegraded at germination. The protein is Gamma conglutin 2 of Lupinus angustifolius (Narrow-leaved blue lupine).